The sequence spans 348 residues: Mycothiol acetyltransferase (348 aa).

N-acetyltransferase domains follow at residues 12–156 (TSMR…VDVT) and 169–330 (VAVR…HGTP). Position 44 (glutamate 44) interacts with 1D-myo-inositol 2-(L-cysteinylamino)-2-deoxy-alpha-D-glucopyranoside. An acetyl-CoA-binding site is contributed by 91-93 (LVV). Residues glutamate 196, lysine 235, and glutamate 253 each contribute to the 1D-myo-inositol 2-(L-cysteinylamino)-2-deoxy-alpha-D-glucopyranoside site. Acetyl-CoA contacts are provided by residues 257-259 (VGV) and 264-270 (QGLGMGR). A 1D-myo-inositol 2-(L-cysteinylamino)-2-deoxy-alpha-D-glucopyranoside-binding site is contributed by tyrosine 291. 296–301 (NTVAVH) lines the acetyl-CoA pocket. A disordered region spans residues 320–348 (PPAGSPAHGTPLVRVTDTPSSPGDATMGS). Polar residues predominate over residues 336–348 (DTPSSPGDATMGS).

This sequence belongs to the acetyltransferase family. MshD subfamily. As to quaternary structure, monomer.

It carries out the reaction 1D-myo-inositol 2-(L-cysteinylamino)-2-deoxy-alpha-D-glucopyranoside + acetyl-CoA = mycothiol + CoA + H(+). Functionally, catalyzes the transfer of acetyl from acetyl-CoA to desacetylmycothiol (Cys-GlcN-Ins) to form mycothiol. This is Mycothiol acetyltransferase from Cellulomonas flavigena (strain ATCC 482 / DSM 20109 / BCRC 11376 / JCM 18109 / NBRC 3775 / NCIMB 8073 / NRS 134).